A 483-amino-acid polypeptide reads, in one-letter code: PAT complex subunit CCDC47 (483 aa).

The N-terminal stretch at 1-20 (MKAFHTFCVVLLVFGSVSEA) is a signal peptide. Residues 21-135 (KFDDFEDEED…PAHLQNSWES (115 aa)) are Cytoplasmic-facing. The interval 46–118 (MEDSVTESPQ…PDTSSSKNKD (73 aa)) is disordered. Residues 60 to 104 (TEDDEDETTVELEGQDENQEGDFEDADTQEGDTESEPYDDEEFEG) are compositionally biased toward acidic residues. Positions 105-118 (YEDKPDTSSSKNKD) are enriched in basic and acidic residues. A helical transmembrane segment spans residues 136 to 155 (YYLEILMVTGLLAYIMNYII). The Lumenal portion of the chain corresponds to 156–483 (GKNKNSRLAQ…KMKQIKVKAM (328 aa)). Asn-178 is a glycosylation site (N-linked (GlcNAc...) asparagine). A disordered region spans residues 424–483 (QRQEAAQSRREEKKRAEKERIMNEEDPEKQRRLEEAALRREQKKLEKKQMKMKQIKVKAM). Basic and acidic residues predominate over residues 430–472 (QSRREEKKRAEKERIMNEEDPEKQRRLEEAALRREQKKLEKKQ). Residues 450-483 (PEKQRRLEEAALRREQKKLEKKQMKMKQIKVKAM) are a coiled coil. Basic residues predominate over residues 473 to 483 (MKMKQIKVKAM).

This sequence belongs to the CCDC47 family. Component of the PAT complex, composed of WDR83OS/Asterix and CCDC47. The PAT complex is part of the multi-pass translocon (MPT) complex, composed of three subcomplexes, the GEL complex (composed of RAB5IF/OPTI and TMCO1), the BOS complex (composed of NCLN/Nicalin, NOMO and TMEM147) and the PAT complex (composed of WDR83OS/Asterix and CCDC47). The MPT complex associates with the SEC61 complex. Interacts with VCP, HSPA5, DERL1, DERL2 and SELENOS.

The protein localises to the endoplasmic reticulum membrane. Its subcellular location is the rough endoplasmic reticulum membrane. Component of the multi-pass translocon (MPT) complex that mediates insertion of multi-pass membrane proteins into the lipid bilayer of membranes. The MPT complex takes over after the SEC61 complex: following membrane insertion of the first few transmembrane segments of proteins by the SEC61 complex, the MPT complex occludes the lateral gate of the SEC61 complex to promote insertion of subsequent transmembrane regions. Within the MPT complex, the PAT subcomplex sequesters any highly polar regions in the transmembrane domains away from the non-polar membrane environment until they can be buried in the interior of the fully assembled protein. Within the PAT subcomplex, CCDC47 occludes the lateral gate of the SEC61 complex. Involved in the regulation of calcium ion homeostasis in the ER. Required for proper protein degradation via the ERAD (ER-associated degradation) pathway. Has an essential role in the maintenance of ER organization during embryogenesis. The protein is PAT complex subunit CCDC47 of Homo sapiens (Human).